We begin with the raw amino-acid sequence, 762 residues long: 5-methyltetrahydropteroyltriglutamate--homocysteine methyltransferase (762 aa).

Residues Arg18–Lys21 and Lys112 each bind 5-methyltetrahydropteroyltri-L-glutamate. Residues Ile435–Ser437 and Glu488 contribute to the L-homocysteine site. L-methionine is bound by residues Ile435–Ser437 and Glu488. Residues Arg519–Cys520 and Trp565 each bind 5-methyltetrahydropteroyltri-L-glutamate. Residue Asp603 coordinates L-homocysteine. Asp603 provides a ligand contact to L-methionine. Residue Glu609 participates in 5-methyltetrahydropteroyltri-L-glutamate binding. The Zn(2+) site is built by His645, Cys647, and Glu669. His698 functions as the Proton donor in the catalytic mechanism. Cys730 is a Zn(2+) binding site.

Belongs to the vitamin-B12 independent methionine synthase family. The cofactor is Zn(2+).

It catalyses the reaction 5-methyltetrahydropteroyltri-L-glutamate + L-homocysteine = tetrahydropteroyltri-L-glutamate + L-methionine. It participates in amino-acid biosynthesis; L-methionine biosynthesis via de novo pathway; L-methionine from L-homocysteine (MetE route): step 1/1. In terms of biological role, catalyzes the transfer of a methyl group from 5-methyltetrahydrofolate to homocysteine resulting in methionine formation. The chain is 5-methyltetrahydropteroyltriglutamate--homocysteine methyltransferase from Bacillus licheniformis (strain ATCC 14580 / DSM 13 / JCM 2505 / CCUG 7422 / NBRC 12200 / NCIMB 9375 / NCTC 10341 / NRRL NRS-1264 / Gibson 46).